The sequence spans 728 residues: Catalase-peroxidase 1 (728 aa).

Positions 1-16 are cleaved as a signal peptide; sequence MDKAQHTQGKCPVAHG. Residues 97–225 constitute a cross-link (tryptophyl-tyrosyl-methioninium (Trp-Tyr) (with M-251)); that stretch reads WHSAGTYRMA…LAAVMMGLIY (129 aa). The active-site Proton acceptor is H98. The tryptophyl-tyrosyl-methioninium (Tyr-Met) (with W-97) cross-link spans 225-251; it reads YVNPEGVDGQPDPLKTAQDIRVTFERM. Residue H266 coordinates heme b.

The protein belongs to the peroxidase family. Peroxidase/catalase subfamily. Homodimer or homotetramer. It depends on heme b as a cofactor. In terms of processing, formation of the three residue Trp-Tyr-Met cross-link is important for the catalase, but not the peroxidase activity of the enzyme.

The catalysed reaction is H2O2 + AH2 = A + 2 H2O. It carries out the reaction 2 H2O2 = O2 + 2 H2O. In terms of biological role, bifunctional enzyme with both catalase and broad-spectrum peroxidase activity. This chain is Catalase-peroxidase 1, found in Shewanella frigidimarina (strain NCIMB 400).